A 241-amino-acid chain; its full sequence is Cobalt transport protein CbiM (241 aa).

An N-terminal signal peptide occupies residues 1–23; sequence MKKNLTFFMVIALLFTITPNVYA. The next 6 helical transmembrane spans lie at 29 to 49, 66 to 86, 98 to 118, 121 to 141, 160 to 180, and 202 to 222; these read GFLPPMWSGVYFVISAPFIII, MLLGLVAAYAFILSAMKIPSV, LSAIIFGPFISAIVGLIVLIF, ILLAHGGITTLGANTLSMGIM, VAVFLAATLGDLFTYFITSVQ, and IFSITQIPLAIMEGILTVIIF.

Belongs to the CbiM family. In terms of assembly, forms an energy-coupling factor (ECF) transporter complex composed of an ATP-binding protein (A component, CbiO), a transmembrane protein (T component, CbiQ) and 2 possible substrate-capture proteins (S components, CbiM and CbiN) of unknown stoichimetry.

It localises to the cell membrane. The protein operates within cofactor biosynthesis; adenosylcobalamin biosynthesis. Functionally, part of the energy-coupling factor (ECF) transporter complex CbiMNOQ involved in cobalt import. The chain is Cobalt transport protein CbiM from Clostridium tetani (strain Massachusetts / E88).